The following is a 685-amino-acid chain: DNA ligase (685 aa).

NAD(+)-binding positions include 39–43 (DGEYD), 88–89 (SL), and Glu119. Lys121 acts as the N6-AMP-lysine intermediate in catalysis. NAD(+) is bound by residues Arg142, Glu182, Lys302, and Lys326. Residues Cys420, Cys423, Cys438, and Cys443 each contribute to the Zn(2+) site. In terms of domain architecture, BRCT spans 606–685 (DNATFFSEKR…QTFLEHLDRG (80 aa)).

The protein belongs to the NAD-dependent DNA ligase family. LigA subfamily. Requires Mg(2+) as cofactor. Mn(2+) is required as a cofactor.

It carries out the reaction NAD(+) + (deoxyribonucleotide)n-3'-hydroxyl + 5'-phospho-(deoxyribonucleotide)m = (deoxyribonucleotide)n+m + AMP + beta-nicotinamide D-nucleotide.. In terms of biological role, DNA ligase that catalyzes the formation of phosphodiester linkages between 5'-phosphoryl and 3'-hydroxyl groups in double-stranded DNA using NAD as a coenzyme and as the energy source for the reaction. It is essential for DNA replication and repair of damaged DNA. The chain is DNA ligase from Desulforapulum autotrophicum (strain ATCC 43914 / DSM 3382 / VKM B-1955 / HRM2) (Desulfobacterium autotrophicum).